The chain runs to 413 residues: Palmitoyltransferase ZDHHC6 (413 aa).

Over 1–24 (MGTFCSVIKFENLQELKRLCHWGP) the chain is Cytoplasmic. The helical transmembrane segment at 25–45 (IIALGVIAICSTMAMIDSVLW) threads the bilayer. The Lumenal portion of the chain corresponds to 46 to 57 (YWPLHTTGGSVN). A helical transmembrane segment spans residues 58–78 (FIMLINWTVMILYNYFNAMFV). Residues 79–143 (GPGFVPLGWK…NCCGYQNHAS (65 aa)) lie on the Cytoplasmic side of the membrane. One can recognise a DHHC domain in the interval 99–149 (QYCKVCQAYKAPRSHHCRKCNRCVMKMDHHCPWINNCCGYQNHASFTLFLL). C129 functions as the S-palmitoyl cysteine intermediate in the catalytic mechanism. A helical transmembrane segment spans residues 144 to 164 (FTLFLLLAPLGCIHAAFIFVM). At 165–205 (TMYTQLYHRLSFGWNTVKIDMSAARRDPLPIVPFGLAAFAT) the chain is on the lumenal side. A helical transmembrane segment spans residues 206-226 (TLFALGLALGTTIAVGMLFFI). Residues 227–413 (QMKIILRNKT…QAPEGEKKNR (187 aa)) are Cytoplasmic-facing. One can recognise an SH3 domain in the interval 313–398 (VRSVRYKVIE…PRKCVEKCPC (86 aa)). Residues C328, C329, and C343 are each lipidated (S-palmitoyl cysteine). The short motif at 410–413 (KKNR) is the Di-lysine motif element.

The protein belongs to the DHHC palmitoyltransferase family. In terms of assembly, homooligomerizes. Interacts with SELENOK. Palmitoylated at 3 different sites by ZDHHC16. The combination of the different palmitoylation events strongly affects the quaternary assembly of ZDHHC6, its localization, stability and function. Palmitoylation at Cys-328 accelerates the turnover of ZDHHC6. Depalmitoylated by LYPLA2.

It localises to the endoplasmic reticulum membrane. It catalyses the reaction L-cysteinyl-[protein] + hexadecanoyl-CoA = S-hexadecanoyl-L-cysteinyl-[protein] + CoA. It carries out the reaction L-cysteinyl-[protein] + octadecanoyl-CoA = S-octadecanoyl-L-cysteinyl-[protein] + CoA. Endoplasmic reticulum palmitoyl acyltransferase that mediates palmitoylation of proteins such as AMFR, CALX, ITPR1 and TFRC. Palmitoylates calnexin (CALX), which is required for its association with the ribosome-translocon complex and efficient folding of glycosylated proteins. Mediates palmitoylation of AMFR, promoting AMFR distribution to the peripheral endoplasmic reticulum. Together with SELENOK, palmitoylates ITPR1 in immune cells, leading to regulate ITPR1 stability and function. Stearoyltransferase that mediates stearoylation of TFRC to inhibit TFRC-mediated activation of the JNK pathway and mitochondrial fragmentation. The sequence is that of Palmitoyltransferase ZDHHC6 from Homo sapiens (Human).